The chain runs to 838 residues: MTDTTLPPDDSLDRIEPVDIQQEMQRSYIDYAMSVIVGRALPEVRDGLKPVHRRVLYAMFDSGFRPDRSHAKSARSVAETMGNYHPHGDASIYDTLVRMAQPWSLRYPLVDGQGNFGSPGNDPPAAMRYTEARLTPLAMEMLREIDEETVDFIPNYDGRVQEPTVLPSRFPNLLANGSGGIAVGMATNIPPHNLRELADAVFWALENHDADEEETLAAVMGRVKGPDFPTAGLIVGSQGTADAYKTGRGSIRMRGVVEVEEDSRGRTSLVITELPYQVNHDNFITSIAEQVRDGKLAGISNIEDQSSDRVGLRIVIEIKRDAVAKVVINNLYKHTQLQTSFGANMLAIVDGVPRTLRLDQLIRYYVDHQLDVIVRRTTYRLRKANERAHILRGLVKALDALDEVIALIRASETVDIARAGLIELLDIDEIQAQAILDMQLRRLAALERQRIIDDLAKIEAEIADLEDILAKPERQRGIVRDELAEIVDRHGDDRRTRIIAADGDVSDEDLIAREDVVVTITETGYAKRTKTDLYRSQKRGGKGVQGAGLKQDDIVAHFFVCSTHDLILFFTTQGRVYRAKAYDLPEASRTARGQHVANLLAFQPEERIAQVIQIRGYTDAPYLVLATRNGLVKKSKLTDFDSNRSGGIVAVNLRDNDELVGAVLCSADDDLLLVSANGQSIRFSATDEALRPMGRATSGVQGMRFNIDDRLLSLNVVREGTYLLVATSGGYAKRTAIEEYPVQGRGGKGVLTVMYDRRRGRLVGALIVDDDSELYAVTSGGGVIRTAARQVRKAGRQTKGVRLMNLGEGDTLLAIARNAEESGDDNAVDANGADQTGN.

The Topo IIA-type catalytic domain occupies 41-510 (LPEVRDGLKP…ADGDVSDEDL (470 aa)). Tyr-129 serves as the catalytic O-(5'-phospho-DNA)-tyrosine intermediate. Residues 537–543 (QKRGGKG) carry the GyrA-box motif.

This sequence belongs to the type II topoisomerase GyrA/ParC subunit family. Heterotetramer, composed of two GyrA and two GyrB chains. In the heterotetramer, GyrA contains the active site tyrosine that forms a transient covalent intermediate with DNA, while GyrB binds cofactors and catalyzes ATP hydrolysis. Requires Mg(2+) as cofactor.

It localises to the cytoplasm. It catalyses the reaction ATP-dependent breakage, passage and rejoining of double-stranded DNA.. With respect to regulation, DNA supercoiling is inhibited by EDTA, novobiocin, coumermycin and ciprofloxacin. Functionally, a type II topoisomerase that negatively supercoils closed circular double-stranded (ds) DNA in an ATP-dependent manner to modulate DNA topology and maintain chromosomes in an underwound state. Also catalyzes the interconversion of other topological isomers of double-stranded DNA rings, including catenanes and knotted rings. Relaxes negatively supercoiled DNA in an ATP-independent manner. A linear reaction intermediate can be trapped in the presence of the antibiotic ciprofloxacin. Negative supercoiling favors strand separation, and DNA replication, transcription, recombination and repair, all of which involve strand separation. Type II topoisomerases break and join 2 DNA strands simultaneously in an ATP-dependent manner. This Mycobacterium bovis (strain BCG / Pasteur 1173P2) protein is DNA gyrase subunit A.